The chain runs to 323 residues: Extracellular endo-alpha-(1-&gt;5)-L-arabinanase 1 (323 aa).

A signal peptide spans 1 to 32 (MKKKKTWKRFLHFSSAALAAGLIFTSAAPAEA). The active-site Proton acceptor is the D44. D44 lines the substrate pocket. Residue D107 coordinates Ca(2+). Substrate-binding positions include G125 and 160-163 (NAID). E165 contributes to the Ca(2+) binding site. Residue 180–182 (SFW) coordinates substrate. The active-site Proton donor is the E215. Residue D287 coordinates Ca(2+).

It belongs to the glycosyl hydrolase 43 family. Requires Ca(2+) as cofactor.

Its subcellular location is the secreted. The enzyme catalyses Endohydrolysis of (1-&gt;5)-alpha-arabinofuranosidic linkages in (1-&gt;5)-arabinans.. The protein operates within glycan metabolism; L-arabinan degradation. In terms of biological role, involved in the degradation of arabinan and is a key enzyme in the complete degradation of the plant cell wall. Catalyzes the internal cleavage of alpha-(1-&gt;5)-L-arabinofuranosyl residues of linear 1,5-alpha-L-arabinan and of branched sugar beet arabinan. It displays no activity against heavily substituted arabinans or a range of other polysaccharides (larch wood arabinogalactan, wheat arabinoxylan and p-nitrophenyl-alpha-L-arabinofuranoside). The enzyme activity is progressively reduced as alpha-(1-&gt;5)-chains become shorter or more highly substituted. This Bacillus subtilis (strain 168) protein is Extracellular endo-alpha-(1-&gt;5)-L-arabinanase 1 (abnA).